Reading from the N-terminus, the 95-residue chain is Co-chaperonin GroES (95 aa).

This sequence belongs to the GroES chaperonin family. In terms of assembly, heptamer of 7 subunits arranged in a ring. Interacts with the chaperonin GroEL.

It is found in the cytoplasm. In terms of biological role, together with the chaperonin GroEL, plays an essential role in assisting protein folding. The GroEL-GroES system forms a nano-cage that allows encapsulation of the non-native substrate proteins and provides a physical environment optimized to promote and accelerate protein folding. GroES binds to the apical surface of the GroEL ring, thereby capping the opening of the GroEL channel. This chain is Co-chaperonin GroES, found in Chlorobaculum parvum (strain DSM 263 / NCIMB 8327) (Chlorobium vibrioforme subsp. thiosulfatophilum).